We begin with the raw amino-acid sequence, 349 residues long: Magnesium-protoporphyrin IX monomethyl ester [oxidative] cyclase (349 aa).

A disordered region spans residues Met1 to His22.

The protein belongs to the AcsF family. It depends on Fe cation as a cofactor.

It carries out the reaction Mg-protoporphyrin IX 13-monomethyl ester + 3 NADPH + 3 O2 + 2 H(+) = 3,8-divinyl protochlorophyllide a + 3 NADP(+) + 5 H2O. The protein operates within porphyrin-containing compound metabolism; chlorophyll biosynthesis (light-independent). Functionally, catalyzes the formation of the isocyclic ring in chlorophyll biosynthesis. Mediates the cyclase reaction, which results in the formation of divinylprotochlorophyllide (Pchlide) characteristic of all chlorophylls from magnesium-protoporphyrin IX 13-monomethyl ester (MgPMME). This is Magnesium-protoporphyrin IX monomethyl ester [oxidative] cyclase from Prochlorococcus marinus (strain MIT 9211).